Here is a 412-residue protein sequence, read N- to C-terminus: Squamosa promoter-binding-like protein 2 (412 aa).

Residues 1 to 81 (MDWDAKMPSW…AAAAGKRARA (81 aa)) are disordered. A compositionally biased stretch (gly residues) spans 18–31 (PSGGGGGGGGGGGA). Low complexity-rich tracts occupy residues 48–57 (VSAASAAPAA) and 67–81 (SSSS…RARA). An SBP-type zinc finger spans residues 89–167 (VPACSVEGCA…DGHNKRRRKP (79 aa)). Zn(2+) is bound by residues Cys-92, Cys-97, Cys-115, His-118, Cys-134, Cys-137, His-141, and Cys-153. The Bipartite nuclear localization signal signature appears at 150–166 (KRSCRKRLDGHNKRRRK).

In terms of tissue distribution, expressed in stems, leaf sheaths, and young panicles.

Its subcellular location is the nucleus. In terms of biological role, trans-acting factor that binds specifically to the consensus nucleotide sequence 5'-TNCGTACAA-3'. May be involved in panicle development. The sequence is that of Squamosa promoter-binding-like protein 2 (SPL2) from Oryza sativa subsp. japonica (Rice).